Here is a 434-residue protein sequence, read N- to C-terminus: Trigger factor (434 aa).

The 86-residue stretch at 160-245 (GDKVKMNFVG…LTEVQAANLP (86 aa)) folds into the PPIase FKBP-type domain.

It belongs to the FKBP-type PPIase family. Tig subfamily.

Its subcellular location is the cytoplasm. The catalysed reaction is [protein]-peptidylproline (omega=180) = [protein]-peptidylproline (omega=0). Its function is as follows. Involved in protein export. Acts as a chaperone by maintaining the newly synthesized protein in an open conformation. Functions as a peptidyl-prolyl cis-trans isomerase. This Shewanella sp. (strain W3-18-1) protein is Trigger factor.